A 75-amino-acid polypeptide reads, in one-letter code: UPF0270 protein PP_1747 (75 aa).

This sequence belongs to the UPF0270 family.

The chain is UPF0270 protein PP_1747 from Pseudomonas putida (strain ATCC 47054 / DSM 6125 / CFBP 8728 / NCIMB 11950 / KT2440).